Here is a 106-residue protein sequence, read N- to C-terminus: MVNQVAQCFTVRRVWLVVVVGLLVHQTTARYVFEECPGVMGNRALHGKVTRVCEDCYNVFRDTDVLAGCRKGCFSSEMFKLCLLAMERVEEFPDFKRWIGILNAGR.

Positions 1-29 (MVNQVAQCFTVRRVWLVVVVGLLVHQTTA) are cleaved as a signal peptide. 3 disulfide bridges follow: C36/C73, C53/C69, and C56/C82. A104 is modified (alanine amide). The propeptide occupies 105–106 (GR).

In terms of tissue distribution, sinus gland of the eyestalk.

It localises to the secreted. Its function is as follows. Inhibits Y-organs where molting hormone (ecdysteroid) is secreted. A molting cycle is initiated when MIH secretion diminishes or stops. The protein is Molt-inhibiting hormone of Faxonius limosus (Spinycheek crayfish).